A 433-amino-acid polypeptide reads, in one-letter code: Enolase 2 (433 aa).

Residues 34–56 (RGMVPSGASTGEHEAVELRDGDK) are disordered. Over residues 44–56 (GEHEAVELRDGDK) the composition is skewed to basic and acidic residues. Position 163 (Q163) interacts with (2R)-2-phosphoglycerate. Residue E205 is the Proton donor of the active site. Positions 243, 290, and 317 each coordinate Mg(2+). Residues K342, R371, S372, and K393 each coordinate (2R)-2-phosphoglycerate. The active-site Proton acceptor is K342.

It belongs to the enolase family. The cofactor is Mg(2+).

The protein resides in the cytoplasm. It is found in the secreted. Its subcellular location is the cell surface. The catalysed reaction is (2R)-2-phosphoglycerate = phosphoenolpyruvate + H2O. It functions in the pathway carbohydrate degradation; glycolysis; pyruvate from D-glyceraldehyde 3-phosphate: step 4/5. Its function is as follows. Catalyzes the reversible conversion of 2-phosphoglycerate (2-PG) into phosphoenolpyruvate (PEP). It is essential for the degradation of carbohydrates via glycolysis. This is Enolase 2 from Lactococcus lactis subsp. cremoris (strain SK11).